A 147-amino-acid chain; its full sequence is Lipoprotein YfjS (147 aa).

Positions 1–20 (MKRKTLPLLALVATSLFLSA) are cleaved as a signal peptide. Cysteine 21 is lipidated: N-palmitoyl cysteine. Residue cysteine 21 is the site of S-diacylglycerol cysteine attachment.

The protein to E.coli YafY.

The protein localises to the cell inner membrane. Does not induce degP when overexpressed unless it is mutated to resemble YafY. The chain is Lipoprotein YfjS (yfjS) from Escherichia coli (strain K12).